A 2705-amino-acid polypeptide reads, in one-letter code: MEQMDCKPYQPLSKVKHEVDLTYTSSSDESEDGRKQRQSYDSRETLNEYSQELRLNYNSQSRKRKNTDQSTQDMEFCETPHILCSGYQTDLHGVSEHSYPLEVGSDVDTETEGGASPDHALRMWMRGMKSEHSSCLSSRANSALSLTDTDHERKSDGENDMPGSPHNQFTFRPLPPPPPPPHACTCTRKPPPAADSLQRRSMTTRSQPSPAAPTPPTSTQDSVHLHNSWVLNSNIPLETRHFLFKHGSGSSAIFSAASQNYPLTSNTVYSPPPRPLPRNTFSRPAFTFSKPYRCCNWKCTALSATAITVTLALLLAYVIAVHLFGLTWQLQPVEGQLYENGVSKGNKGAESTDTTYSPIGGKVSDKTEKKVFQKGRAIDTGEVEIGAQVMQTIPPGLFWRFQITIHHPVYLKFNISLAKDSLLGIYGRRNIPPTHTQFDFVKLMDGKQLIKQEPKNSEEPQQAPRNLILTSLQETGFIEYMDQGAWHMAFYNDGKKVEQVFVLTTAIEVLDDCSTNCNGNGECISGHCHCFPGFLGPDCAKDSCPVLCSGNGEYEKGHCVCRNGWKGPECDVPEEQCIDPTCFGHGTCIMGVCICVPGYKGEICEEEDCLDPMCSGHGVCVQGECHCSAGWGGVNCETSLPICQEHCSGHGTFLLDVGLCSCEPQWTGSDCSTELCTLDCGSHGVCSRGICQCEEGWVGPTCEERTCHSHCAEHGQCKDGKCECSPGWEGDHCTIDGCPGLCYGNGRCTLDQNGWHCVCQVGWSGSGCNVVMEMACGDNLDNDGDGLTDCVDPDCCQQNNCYASPLCQGSPDPLDLIQHSQPPFSQHPPRLFYDRIRFLIGKESTHVIPGDISFESRRASVIRGQVVAIDGTPLVGVNVSFLHHDEYGYTISRQDGSFDLVAVGGISVTLVFDRSPFISEKRTLWLSWNRFVIVDKVVMQRAESDIPSCDVSSFISPNPIVLPSPLTAFGGSCPERGTVIPELQVVQEEIPIPSSFVKLSYLSSRTPGYKTLLRVILTHTTIPSGMTKVHLIIAVEGRLLQKWFPAAANLVYTFAWNKTDIYGQKVSGLAEAMVSVGYEYETCPDFILWEKRTVILQGFEMDASNLGGWSINKHHVLNPQSGIVHKGNGENMFISQQPPVISTMMGNGHQRSVSCSNCNGLALNSKLFAPVALTSGPDGSVYIGDFNFVRRIFPSGNSIGILELRNRDTRHSTSPAHKYYLAVDPVSESLYLSDTNTRRVYKAKSLIETKDLAKNVDVVAGTGDQCLPFDQSHCGDGGKASEASLNSPRGITIDKHGFIYFVDGTMIRKIDENGMITTIIGSNGLTSTQPLSCDSGMDITQVRLEWPTDLTVNPLDNSLYVLDNNIVLQISESRRVRIIAGRPIHCQVPGIDHFIVSKVAIHSTLESARAIAVSHSGIPYIRETDERKINRIQQVTTNGEISIIAGAPSDCDCKIDPNCDCFSGDGGYAKDAKLKAPSSLAVSPDDTLYVADLGNIRIRAVSRNKAHLSDTNMYEIASPADQELYQFTINGTHLHTLNLITRDYIYNFTYSGEGDVATITSSNGNSVHIRRDTSGLPLWVVVPGGQVYWLTISSNGVLKRVYAQGYNLALMTYPGNTGLLATKSDENGWTTVYEYDSDGHLTNATFPTGEVSSFHSDVEKLTRVELDTSNRENMVTATNFSATSTIYTLKQDNTQNIYRVSPDGSLRVTFASGMEITLNTEPHILAGVVSPTLGKCNISLPGEHNSNLIEWRQRREQTKGNISTFERRLRAHNRNLLSIDFDHVTRTGKIYDDHRKFTLRIMYDQTGRPVLWSPISKYNEVNITYSHSGLVTYIQRGTWTEKMEYDPSGNIISRTWADGKIWSYTYLEKSVMLLLHSQRRYIFEYDQSDYLLSVTMPSMVRHALQTMLSVGYYRNIYTPPDSGAAFIQDVTRDGRLLQTLYPGTGRRVLYKYSKQSRLSEILYDTTQVTFTYEESSGVIKTIHLMHDGFICTIRYRQTGPLIGRQIFRFSEEGLVNARFDYSYNNFRVTSMQAMINETPLPIDLYRYVDVSGRTEQFGKFSVINYDLNQVITTTVMKHTKIFSANGQVIEVQYEILKSIAYWMTIQYDNMGRMVICDIRVGVDANITRYFYEYDRDGQLQTVSVNDKTQWRYSYDLNGNINLLSHGNSARLTPLRYDLRDRITRLGEIQYKMDEDGFLRQRGNEIFEYNSNGLLNKAYNKVSGWTVQYCYDGLGRRVASKSSLGQHLQFFYADLSNPIRVTHLYNHSSSEITSLYYDLQGHLIAMELSSGEEYYVACDNTGTPLAVFSSRGQVIKEILYTPYGEIYQDTNPDFQVVIGFHGGLYDSLTKLVHLGQRDYDVIAGRWTTPNHHIWKHLNAVPQPFNLYSFENNYPVGRIQDVAKYTTDIGSWLELFGFQLHNVLPGFPKPEIEALETTYELLQLQTKTQEWDPGKTILGIQCELQKQLRNFISLDQLPMTPRYSDGKCYEGVKQPRFAAIPSVFGKGIKFAIKDGIVTADIIGVANEDSRRIAAILNNAHYLENLHFTIEGRDTHYFIKLGSLEEDLSLIGNTGGRRILENGVNVTVSQMTSVINGRTRRFADIQLQHGALCFNVRYGTTVEEEKNHVLEVARQRAVAQAWTKEQRRLQEGEEGIRAWTDGEKQQLLNTGRVQGYDGYFVLSVEQYLELSDSANNIHFMRQSEIGRR.

Disordered regions lie at residues Met-1–Asp-73 and Cys-135–Ser-222. One can recognise a Teneurin N-terminal domain in the interval Met-1–Cys-299. At Met-1–Thr-305 the chain is on the cytoplasmic side. Basic and acidic residues predominate over residues Asp-32–Leu-46. The short motif at Arg-62–Lys-65 is the Nuclear localization signal (NLS) element. Residues Cys-135–Thr-147 are compositionally biased toward polar residues. Residues Asp-148 to Gly-157 show a composition bias toward basic and acidic residues. Pro residues predominate over residues Pro-173–His-182. A Required for interaction with SORBS1 (Ten-1 ICD form) motif is present at residues Pro-271 to Arg-278. The chain crosses the membrane as a helical span at residues Ala-306–Leu-326. Residues Thr-327–Arg-2705 are Extracellular-facing. A glycan (N-linked (GlcNAc...) asparagine) is linked at Asn-414. 8 EGF-like domains span residues Val-509–Ala-540, Lys-541–Val-572, Pro-573–Glu-605, Glu-606–Thr-638, Ser-639–Ser-672, Thr-673–Cys-702, Glu-703–Thr-734, and Ile-735–Asn-769. Intrachain disulfides connect Cys-513–Cys-523, Cys-517–Cys-528, Cys-530–Cys-539, Cys-548–Cys-559, Cys-561–Cys-570, Cys-577–Cys-588, Cys-582–Cys-593, Cys-595–Cys-604, Cys-609–Cys-620, Cys-614–Cys-625, Cys-627–Cys-636, Cys-647–Cys-660, Cys-662–Cys-671, Cys-676–Cys-686, Cys-680–Cys-691, Cys-693–Cys-702, Cys-707–Cys-717, Cys-711–Cys-722, Cys-724–Cys-733, Cys-738–Cys-748, Cys-742–Cys-757, and Cys-759–Cys-768. N-linked (GlcNAc...) asparagine glycans are attached at residues Asn-878 and Asn-1057. NHL repeat units follow at residues Leu-1167–Ile-1192, Leu-1202–Leu-1246, Ser-1272–Ile-1316, Leu-1331–Arg-1382, and Cys-1461–Asn-1504. One copy of the YD 1 repeat lies at Tyr-1514–His-1533. N-linked (GlcNAc...) asparagine glycans are attached at residues Asn-1530 and Asn-1547. YD repeat units follow at residues Tyr-1550–Arg-1570, Tyr-1588–Thr-1612, Tyr-1613–Glu-1634, and Tyr-1635–His-1655. N-linked (GlcNAc...) asparagine glycans are attached at residues Asn-1643, Asn-1679, Asn-1737, Asn-1761, and Asn-1822. 11 YD repeats span residues Tyr-1825–Glu-1844, Tyr-1845–Thr-1865, Tyr-1866–Glu-1884, Tyr-1885–Gln-1905, Tyr-1913–Asp-1929, Val-1930–Leu-1949, Tyr-1950–Thr-1969, Tyr-1972–Thr-1992, Tyr-1995–Val-2015, Tyr-2065–Asn-2085, and Tyr-2093–Met-2113. Residue Asn-2125 is glycosylated (N-linked (GlcNAc...) asparagine). YD repeat units follow at residues Tyr-2133–Ser-2153, Tyr-2154–Leu-2174, Tyr-2176–Gly-2196, Tyr-2208–Tyr-2228, and Tyr-2230–Phe-2250. An N-linked (GlcNAc...) asparagine glycan is attached at Asn-2265. YD repeat units lie at residues Tyr-2276 to Tyr-2293 and Tyr-2294 to Ile-2317. N-linked (GlcNAc...) asparagine glycosylation is present at Asn-2582.

It belongs to the tenascin family. Teneurin subfamily. Homodimer; disulfide-linked. Heterodimer with other teneurins. Ten-1 ICD interacts with SORBS1 (via third SH3 domain). Interacts with MBD1 isoform 2. Derives from the plasma membrane form by proteolytic processing. Further proteolytic cleavage may be generated. Post-translationally, derives from the plasma membrane form by proteolytic cleavage and translocates to the nucleus. Expressed in the neurons of the developing visual system and in fetal brain.

Its subcellular location is the cell membrane. The protein localises to the nucleus. It is found in the nucleus speckle. It localises to the nucleus matrix. The protein resides in the cytoplasm. Its subcellular location is the cytoskeleton. In terms of biological role, involved in neural development, regulating the establishment of proper connectivity within the nervous system. May function as a cellular signal transducer. Its function is as follows. Plays a role in the regulation of neuroplasticity in the limbic system. Mediates a rapid reorganization of actin- and tubulin-based cytoskeleton elements with an increase in dendritic arborization and spine density formation of neurons in the hippocampus and amygdala. Induces BDNF transcription inhibition in neurons. Activates the mitogen-activated protein (MAP) kinase 2 (MEK2) and extracellular signal-regulated kinase (ERK) cascade. Functionally, induces gene transcription activation. The polypeptide is Teneurin-1 (TENM1) (Gallus gallus (Chicken)).